Reading from the N-terminus, the 488-residue chain is Fumarate hydratase, mitochondrial (488 aa).

A mitochondrion-targeting transit peptide spans 1 to 24 (MLRFTNCSCKTFVKSSYKLNIRRM). Residues 124 to 126 (SGT), 154 to 157 (HPNN), 164 to 166 (SSN), and T212 contribute to the substrate site. H213 serves as the catalytic Proton donor/acceptor. S343 is an active-site residue. Substrate contacts are provided by residues S344 and 349-351 (KVN). T428 carries the post-translational modification Phosphothreonine.

It belongs to the class-II fumarase/aspartase family. Fumarase subfamily. As to quaternary structure, homotetramer.

It localises to the mitochondrion matrix. Its subcellular location is the cytoplasm. The protein localises to the nucleus. It carries out the reaction (S)-malate = fumarate + H2O. The protein operates within carbohydrate metabolism; tricarboxylic acid cycle; (S)-malate from fumarate: step 1/1. Catalyzes the reversible stereospecific interconversion of fumarate to L-malate. In mitochondrion, catalyzes the hydration of fumarate to L-malate in the tricarboxylic acid (TCA) cycle to facilitate a transition step in the production of energy in the form of NADH. In cytoplasm and nucleus, involved in DNA repair in response to DNA damage: following DNA double-strand breaks (DSBs), translocates from the cytosol to the nucleus and promotes DNA repair by catalyzing the dehydration of L-malate to fumarate. The polypeptide is Fumarate hydratase, mitochondrial (Saccharomyces cerevisiae (strain ATCC 204508 / S288c) (Baker's yeast)).